The following is a 65-amino-acid chain: MKALVEFRKKNKKDLYTELLQLLREQFNLRMQSVSGKLKQPHLLRKVRRNIAQVKTLLDSKEEIK.

Belongs to the universal ribosomal protein uL29 family.

In Buchnera aphidicola subsp. Acyrthosiphon pisum (strain APS) (Acyrthosiphon pisum symbiotic bacterium), this protein is Large ribosomal subunit protein uL29 (rpmC).